A 283-amino-acid polypeptide reads, in one-letter code: Nicotine 6-hydroxylase medium subunit (283 aa).

Residues 1–176 (MKLPAIRYAS…TDVWIPSRPN (176 aa)) enclose the FAD-binding PCMH-type domain. FAD is bound by residues 31-35 (AGGQS) and 110-114 (TLGGS).

As to quaternary structure, heterotrimer composed of a large subunit (NdhL), a medium subunit (NdhM) and a small subunit (NdhS). FAD serves as cofactor.

Its subcellular location is the cytoplasm. It catalyses the reaction (R)-nicotine + A + H2O = (R)-6-hydroxynicotine + AH2. It carries out the reaction (S)-nicotine + A + H2O = (S)-6-hydroxynicotine + AH2. Its pathway is alkaloid degradation; nicotine degradation; 6-hydroxypseudooxynicotine from nicotine (R-isomer route): step 1/2. The protein operates within alkaloid degradation; nicotine degradation; 6-hydroxypseudooxynicotine from nicotine (S-isomer route): step 1/2. Nicotine dehydrogenase activity is inhibited by tungsten. Its function is as follows. Component of the nicotine 6-hydroxylase, which is involved in the degradation of nicotine. Catalyzes the hydroxylation of the pyridine ring at C6 to form 6-hydroxynicotine. Can use both L-nicotine and D-nicotine. This Paenarthrobacter nicotinovorans (Arthrobacter nicotinovorans) protein is Nicotine 6-hydroxylase medium subunit.